The chain runs to 322 residues: NAD(P)H-dependent D-xylose reductase (322 aa).

The Proton donor role is filled by Tyr52. His114 contributes to the substrate binding site. NAD(+) contacts are provided by residues 169–170 (SN), 218–227 (SSFGPQSFVE), and 274–284 (KSNLPERLVQN).

The protein belongs to the aldo/keto reductase family. Homodimer.

It carries out the reaction xylitol + NAD(+) = D-xylose + NADH + H(+). The catalysed reaction is xylitol + NADP(+) = D-xylose + NADPH + H(+). It participates in carbohydrate metabolism; D-xylose degradation. Functionally, reduces D-xylose into xylitol. Has a preference for NADPH, but can also utilize NADH as cosubstrate. The protein is NAD(P)H-dependent D-xylose reductase (XYL1) of Candida tenuis (Yeast).